Consider the following 509-residue polypeptide: ATP synthase subunit alpha (509 aa).

169–176 contacts ATP; that stretch reads GDRQTGKT.

This sequence belongs to the ATPase alpha/beta chains family. As to quaternary structure, F-type ATPases have 2 components, CF(1) - the catalytic core - and CF(0) - the membrane proton channel. CF(1) has five subunits: alpha(3), beta(3), gamma(1), delta(1), epsilon(1). CF(0) has three main subunits: a(1), b(2) and c(9-12). The alpha and beta chains form an alternating ring which encloses part of the gamma chain. CF(1) is attached to CF(0) by a central stalk formed by the gamma and epsilon chains, while a peripheral stalk is formed by the delta and b chains.

It is found in the cell inner membrane. It catalyses the reaction ATP + H2O + 4 H(+)(in) = ADP + phosphate + 5 H(+)(out). Produces ATP from ADP in the presence of a proton gradient across the membrane. The alpha chain is a regulatory subunit. This Methylocella silvestris (strain DSM 15510 / CIP 108128 / LMG 27833 / NCIMB 13906 / BL2) protein is ATP synthase subunit alpha.